Reading from the N-terminus, the 555-residue chain is Alpha-copaene synthase (555 aa).

Mg(2+) is bound by residues aspartate 312, aspartate 316, aspartate 452, serine 456, and glutamate 460. A DDXXD motif motif is present at residues 312–316; sequence DDTYD.

Belongs to the terpene synthase family. The cofactor is Mg(2+). In terms of tissue distribution, mainly expressed in sunflower trichomes.

It carries out the reaction (2E,6E)-farnesyl diphosphate = alpha-copaene + diphosphate. It catalyses the reaction (2E,6E)-farnesyl diphosphate = alpha-muurolene + diphosphate. The catalysed reaction is (2E,6E)-farnesyl diphosphate = alpha-humulene + diphosphate. It participates in secondary metabolite biosynthesis; terpenoid biosynthesis. Functionally, involved in the biosynthesis of germacrene-derived sesquiterpene lactones. Catalyzes the cyclization of farnesyl diphosphate to alpha-copaene, delta-cadinene, alpha-muurolene, beta-caryophyllene and alpha-humulene. The sequence is that of Alpha-copaene synthase (CS) from Helianthus annuus (Common sunflower).